A 200-amino-acid chain; its full sequence is Recombination protein RecR (200 aa).

Residues 57-72 form a C4-type zinc finger; it reads CRSCRTLTEEELCPQC. In terms of domain architecture, Toprim spans 80-175; it reads TLLCVVEGPT…VASRIAHGVP (96 aa).

This sequence belongs to the RecR family.

Functionally, may play a role in DNA repair. It seems to be involved in an RecBC-independent recombinational process of DNA repair. It may act with RecF and RecO. The protein is Recombination protein RecR of Pseudomonas savastanoi pv. phaseolicola (strain 1448A / Race 6) (Pseudomonas syringae pv. phaseolicola (strain 1448A / Race 6)).